Reading from the N-terminus, the 183-residue chain is Proton-transporting V-type ATPase complex assembly regulator TMEM9 (183 aa).

The first 20 residues, 1 to 20 (MKLLCLVAVVGCLLVPPAQA), serve as a signal peptide directing secretion. 3 N-linked (GlcNAc...) asparagine glycosylation sites follow: Asn21, Asn38, and Asn47. Over 21–89 (NKSSEDIRCK…YEERSTTTIK (69 aa)) the chain is Extracellular. A helical membrane pass occupies residues 90 to 110 (VIIVIYLSVVGALLLYMAFLM). At 111 to 183 (LVDPLIRKPD…TVFDRHKMLS (73 aa)) the chain is on the cytoplasmic side. Ser144 bears the Phosphoserine mark.

The protein belongs to the TMEM9 family. Interacts with the v-ATPase accessory protein ATP6AP2 and with the v-ATPase complex subunit ATP6V0D1; these interactions lead to the assembly of the v-ATPase complex. N-glycosylated. Expressed in heart, lung, kidney, liver and intestines. Enriched in the hepatocytes around the central vein.

It localises to the lysosome membrane. Its subcellular location is the late endosome membrane. It is found in the endosome. The protein localises to the multivesicular body membrane. In terms of biological role, transmembrane protein that binds to and facilitates the assembly of lysosomal proton-transporting V-type ATPase (v-ATPase), resulting in enhanced lysosomal acidification and trafficking. By bringing the v-ATPase accessory protein ATP6AP2 and the v-ATPase subunit ATP6V0D1 together, allows v-ATPase complex formation and activation. TMEM9-controlled vesicular acidification induces hyperactivation of Wnt/beta-catenin signaling, involved in development, tissue homeostasis and tissue regeneration, through lysosomal degradation of adenomatous polyposis coli/APC. In the liver, involved in hepatic regeneration. The polypeptide is Proton-transporting V-type ATPase complex assembly regulator TMEM9 (Mus musculus (Mouse)).